We begin with the raw amino-acid sequence, 340 residues long: Putative phosphatidylcholine:ceramide cholinephosphotransferase 3 (340 aa).

Residues 1–25 form a disordered region; the sequence is MGSVSKTVISARGASPDDEQNGTKN. 4 helical membrane passes run 36–56, 81–101, 178–198, and 202–222; these read CIFL…VLAY, SSLG…LLVI, LLFS…AYYL, and IKPL…CMTI. H183 is an active-site residue. The Cytoplasmic segment spans residues 223–340; that stretch reads SRTHYTIDVV…SSSSTYPLPC (118 aa). Catalysis depends on residues H226 and D230. Residues 294–313 are disordered; it reads STPRGQERGGASAESSDSSV.

This sequence belongs to the sphingomyelin synthase family.

The protein resides in the membrane. The enzyme catalyses an N-acyl-sphingoid base + a 1,2-diacyl-sn-glycero-3-phosphocholine = an N-(acyl)-sphingosylphosphocholine + a 1,2-diacyl-sn-glycerol. It carries out the reaction an N-acylsphing-4-enine + a 1,2-diacyl-sn-glycero-3-phosphocholine = a sphingomyelin + a 1,2-diacyl-sn-glycerol. It catalyses the reaction an N-acyl-15-methylhexadecasphing-4-enine + a 1,2-diacyl-sn-glycero-3-phosphocholine = an N-acyl-15-methylhexadecasphing-4-enine-1-phosphocholine + a 1,2-diacyl-sn-glycerol. The protein operates within lipid metabolism; sphingolipid metabolism. Functionally, bidirectional lipid cholinephosphotransferase capable of converting phosphatidylcholine (PC) and ceramide to sphingomyelin (SM) and diacylglycerol (DAG) and vice versa. Direction is dependent on the relative concentrations of DAG and ceramide as phosphocholine acceptors. Directly and specifically recognizes the choline head group on the substrate. Also requires two fatty chains on the choline-P donor molecule in order to be recognized efficiently as a substrate. Does not function strictly as a SM synthase. C.elegans contains specific sphingoid bases, which are unique or different in structure compared to the sphingoid bases found in other animals. Two examples of these distinctive compounds are: 15-methylhexadecasphinganine and 15-methylhexadecasphing-4-enine. This Caenorhabditis elegans protein is Putative phosphatidylcholine:ceramide cholinephosphotransferase 3 (sms-3).